A 419-amino-acid polypeptide reads, in one-letter code: Probable 3-isopropylmalate dehydratase large subunit (419 aa).

Positions 299, 359, and 362 each coordinate [4Fe-4S] cluster.

The protein belongs to the aconitase/IPM isomerase family. LeuC type 2 subfamily. Heterodimer of LeuC and LeuD. Requires [4Fe-4S] cluster as cofactor.

It catalyses the reaction (2R,3S)-3-isopropylmalate = (2S)-2-isopropylmalate. It functions in the pathway amino-acid biosynthesis; L-leucine biosynthesis; L-leucine from 3-methyl-2-oxobutanoate: step 2/4. In terms of biological role, catalyzes the isomerization between 2-isopropylmalate and 3-isopropylmalate, via the formation of 2-isopropylmaleate. This is Probable 3-isopropylmalate dehydratase large subunit from Methanothermobacter thermautotrophicus (strain ATCC 29096 / DSM 1053 / JCM 10044 / NBRC 100330 / Delta H) (Methanobacterium thermoautotrophicum).